The following is a 1521-amino-acid chain: uncharacterized protein (1521 aa).

Disordered stretches follow at residues 1 to 20, 85 to 124, 218 to 254, 431 to 482, and 735 to 797; these read MENNNGNSVINKSNDKNSNN, TFQSPPQPINTSSTQTNYNNQNNPNPNPNPSPNPNSNNNN, ASSPSTPSTPSSSSRSQQQQQQQQQQSSSSSLSSSSS, VLNS…TGIT, and NNNN…HQQQ. Composition is skewed to low complexity over residues 94 to 108, 219 to 254, and 431 to 454; these read NTSSTQTNYNNQNNP, SSPSTPSTPSSSSRSQQQQQQQQQQSSSSSLSSSSS, and VLNSNSNSSSGGASSSSGGSNNTS. Polar residues predominate over residues 455–464; it reads PAIVTSASIH. Low complexity-rich tracts occupy residues 465–482 and 735–762; these read NSNGNSNENEIEKSTGIT and NNNNNNNNNNNNNNNNNNNNNNNNNNIL. Residues 763–774 are compositionally biased toward polar residues; that stretch reads SNTLTSSLINEP. Low complexity predominate over residues 775–788; it reads NQQHQHQQHQQQNQ. Residues 853-903 adopt a coiled-coil conformation; that stretch reads IVNSQQQQQQQQQQQQQQQQQQQQQQQQQQQQQQQQQQQQQQHNNTQNINN. Positions 1398 to 1453 are enriched in low complexity; the sequence is QQPLPTSKTSSSSSSTSSEATPYLSSSVPPSIVTSTPSTTPMISSSNPNTSSLPTS. Residues 1398–1455 are disordered; that stretch reads QQPLPTSKTSSSSSSTSSEATPYLSSSVPPSIVTSTPSTTPMISSSNPNTSSLPTSER.

This is an uncharacterized protein from Dictyostelium discoideum (Social amoeba).